The following is a 309-amino-acid chain: Homoserine kinase (309 aa).

Residue 91-101 (PIGSGLGSSAC) coordinates ATP.

It belongs to the GHMP kinase family. Homoserine kinase subfamily.

Its subcellular location is the cytoplasm. The enzyme catalyses L-homoserine + ATP = O-phospho-L-homoserine + ADP + H(+). The protein operates within amino-acid biosynthesis; L-threonine biosynthesis; L-threonine from L-aspartate: step 4/5. In terms of biological role, catalyzes the ATP-dependent phosphorylation of L-homoserine to L-homoserine phosphate. In Erwinia tasmaniensis (strain DSM 17950 / CFBP 7177 / CIP 109463 / NCPPB 4357 / Et1/99), this protein is Homoserine kinase.